A 682-amino-acid polypeptide reads, in one-letter code: Protein SYG1 homolog (682 aa).

The SPX domain maps to 1 to 219 (MKFGKVIEGQ…HTDLQGFWVD (219 aa)). Over 1–274 (MKFGKVIEGQ…KEHFSANSMR (274 aa)) the chain is Cytoplasmic. Residues 275–295 (FGLLFGAGLPLAIEAACYYNA) traverse the membrane as a helical segment. Residues 296 to 300 (TEQSS) are Extracellular-facing. Residues 301–321 (YLLQIWGGFFLVIFAFVLFDL) traverse the membrane as a helical segment. The Cytoplasmic segment spans residues 322-348 (DCYVWEKTRVNYMLIFEFNQRKSLNWR). A helical transmembrane segment spans residues 349 to 369 (QHLEIVGAVFFIFSLFFFLCM). The Extracellular portion of the chain corresponds to 370–377 (RNFFPGFT). The chain crosses the membrane as a helical span at residues 378–398 (IYFPALFLGVVGTFLIAPVIV). Over 399–406 (PYWRMRRY) the chain is Cytoplasmic. A helical membrane pass occupies residues 407-424 (LIIQLIRVFLSGLSTVHF). At 425–426 (QD) the chain is on the extracellular side. A helical membrane pass occupies residues 427–447 (FFFADQMVSLTYACGNISLFF). Residues 448 to 525 (CLYKRLWRQP…WRIHPGLKYR (78 aa)) are Cytoplasmic-facing. Positions 459-654 (LCNSSHSPLL…VKPHSDVFVS (196 aa)) constitute an EXS domain. Residues 526–546 (VLYTIFAGVNSLFSYTWDILM) traverse the membrane as a helical segment. Over 547-571 (DWNLLVRKDGRWQFREHRILKQLWP) the chain is Extracellular. A helical transmembrane segment spans residues 572–592 (YIIAMILNFIVRSSFIFYCIF). Residues 593–682 (PNHIQHSSGI…QTDVDEAQFS (90 aa)) are Cytoplasmic-facing. A disordered region spans residues 659-682 (SDKNYTDDEDSMDDQTDVDEAQFS). Over residues 665–682 (DDEDSMDDQTDVDEAQFS) the composition is skewed to acidic residues.

The protein belongs to the SYG1 (TC 2.A.94) family.

The protein resides in the cell membrane. Functionally, may function in G-protein coupled signal transduction. In Schizosaccharomyces pombe (strain 972 / ATCC 24843) (Fission yeast), this protein is Protein SYG1 homolog.